The following is a 285-amino-acid chain: 4-hydroxybenzoate octaprenyltransferase (285 aa).

A run of 7 helical transmembrane segments spans residues 20–37 (IGIY…WLAA), 96–116 (FFFV…PFTI), 138–158 (WPQA…FAAI), 166–186 (AWVI…AYAV), 211–231 (IIGF…DLFG), 234–254 (WLYY…QYLL), and 262–282 (AFKA…GIML).

The protein belongs to the UbiA prenyltransferase family. Mg(2+) is required as a cofactor.

It is found in the cell inner membrane. The catalysed reaction is all-trans-octaprenyl diphosphate + 4-hydroxybenzoate = 4-hydroxy-3-(all-trans-octaprenyl)benzoate + diphosphate. Its pathway is cofactor biosynthesis; ubiquinone biosynthesis. Functionally, catalyzes the prenylation of para-hydroxybenzoate (PHB) with an all-trans polyprenyl group. Mediates the second step in the final reaction sequence of ubiquinone-8 (UQ-8) biosynthesis, which is the condensation of the polyisoprenoid side chain with PHB, generating the first membrane-bound Q intermediate 3-octaprenyl-4-hydroxybenzoate. The polypeptide is 4-hydroxybenzoate octaprenyltransferase (Hydrogenovibrio crunogenus (strain DSM 25203 / XCL-2) (Thiomicrospira crunogena)).